Here is a 550-residue protein sequence, read N- to C-terminus: Arginine--tRNA ligase (550 aa).

Positions 130-140 (ANPTGPIHLGG) match the 'HIGH' region motif.

It belongs to the class-I aminoacyl-tRNA synthetase family. In terms of assembly, monomer.

It localises to the cytoplasm. The catalysed reaction is tRNA(Arg) + L-arginine + ATP = L-arginyl-tRNA(Arg) + AMP + diphosphate. The chain is Arginine--tRNA ligase from Corynebacterium diphtheriae (strain ATCC 700971 / NCTC 13129 / Biotype gravis).